We begin with the raw amino-acid sequence, 273 residues long: Putative pyruvate, phosphate dikinase regulatory protein (273 aa).

Position 153–160 (153–160 (GVSRTSKS)) interacts with ADP.

Belongs to the pyruvate, phosphate/water dikinase regulatory protein family. PDRP subfamily.

The enzyme catalyses N(tele)-phospho-L-histidyl/L-threonyl-[pyruvate, phosphate dikinase] + ADP = N(tele)-phospho-L-histidyl/O-phospho-L-threonyl-[pyruvate, phosphate dikinase] + AMP + H(+). It catalyses the reaction N(tele)-phospho-L-histidyl/O-phospho-L-threonyl-[pyruvate, phosphate dikinase] + phosphate + H(+) = N(tele)-phospho-L-histidyl/L-threonyl-[pyruvate, phosphate dikinase] + diphosphate. Its function is as follows. Bifunctional serine/threonine kinase and phosphorylase involved in the regulation of the pyruvate, phosphate dikinase (PPDK) by catalyzing its phosphorylation/dephosphorylation. The protein is Putative pyruvate, phosphate dikinase regulatory protein of Ehrlichia ruminantium (strain Welgevonden).